We begin with the raw amino-acid sequence, 401 residues long: Dual specificity mitogen-activated protein kinase kinase 2 (401 aa).

An N-acetylmethionine modification is found at methionine 1. Serine 23 is modified (phosphoserine). Residues 72-370 (FERISELGAG…LKLLMNHAFI (299 aa)) form the Protein kinase domain. Residues 78–86 (LGAGNGGVV) and lysine 101 each bind ATP. The active-site Proton acceptor is aspartate 194. Phosphoserine; by RAF occurs at positions 222 and 226. The disordered stretch occupies residues 282–310 (PVVDGADGEPHSVSPRPRPPGRPISVGHG). Phosphoserine is present on residues serine 293, serine 295, and serine 306. Phosphothreonine is present on residues threonine 395 and threonine 397.

This sequence belongs to the protein kinase superfamily. STE Ser/Thr protein kinase family. MAP kinase kinase subfamily. As to quaternary structure, interacts with MORG1. Interacts with SGK1. Interacts with KSR1. Interacts with KSR1 and BRAF; the interaction with KSR1 mediates KSR1-BRAF dimerization. Interacts with GLS. It depends on Mg(2+) as a cofactor. In terms of processing, phosphorylation on Ser/Thr by MAP kinase kinase kinases (RAF or MEKK1) positively regulates the kinase activity. Phosphorylated by MAP2K1/MEK1. Low levels of autophosphorylation have been observed. Expressed in adult intestine, kidney, liver, lung, pancreas, spleen, thymus, and at high levels in the neonatal brain. Lower expression is found in adult brain and heart.

It localises to the cytoplasm. Its subcellular location is the membrane. The enzyme catalyses L-seryl-[protein] + ATP = O-phospho-L-seryl-[protein] + ADP + H(+). It catalyses the reaction L-threonyl-[protein] + ATP = O-phospho-L-threonyl-[protein] + ADP + H(+). It carries out the reaction L-tyrosyl-[protein] + ATP = O-phospho-L-tyrosyl-[protein] + ADP + H(+). With respect to regulation, inhibited by serine/threonine phosphatase 2A. Its function is as follows. Catalyzes the concomitant phosphorylation of a threonine and a tyrosine residue in a Thr-Glu-Tyr sequence located in MAP kinases. Activates the ERK1 and ERK2 MAP kinases. Activates BRAF in a KSR1 or KSR2-dependent manner; by binding to KSR1 or KSR2 releases the inhibitory intramolecular interaction between KSR1 or KSR2 protein kinase and N-terminal domains which promotes KSR1 or KSR2-BRAF dimerization and BRAF activation. The polypeptide is Dual specificity mitogen-activated protein kinase kinase 2 (Map2k2) (Mus musculus (Mouse)).